The sequence spans 210 residues: N-(5'-phosphoribosyl)anthranilate isomerase (210 aa).

Belongs to the TrpF family.

It carries out the reaction N-(5-phospho-beta-D-ribosyl)anthranilate = 1-(2-carboxyphenylamino)-1-deoxy-D-ribulose 5-phosphate. It functions in the pathway amino-acid biosynthesis; L-tryptophan biosynthesis; L-tryptophan from chorismate: step 3/5. The chain is N-(5'-phosphoribosyl)anthranilate isomerase (TRP1) from Eremothecium gossypii (strain ATCC 10895 / CBS 109.51 / FGSC 9923 / NRRL Y-1056) (Yeast).